A 365-amino-acid chain; its full sequence is MENIHIQTKSKEYDVHVGKESLSHLTTIVQNMQPSVSNIMIISDEAVAPLHLQTVVDALQIDQKVFSFVVPSGEKEKSFENFYAAHTSALENKLDRNSLIIALGGGMIGDLAGFVAASFMRGIRFVQVPTTLLAHDSAVGGKVAINHPLGKNMIGAFHQPEAVVYHTPFLQSLPEKEWRSGYAEVIKHALIGDVKLYHWLKEEVQTLADLRDEKLIHILTKAIPVKANIVAQDETEKGVRAHLNFGHTLGHALEKELGYGNITHGDGVAVGMLFAIFLSEQVYKVNLAYEEMKQWFLKYGYPKMPSDLSVERLVGLMKQDKKANAGTIHMVLMQEYGVVNVVSIPDETVHIALEAFQKDMGIRSR.

NAD(+)-binding positions include 72–77 (SGEKEK), 130–131 (TT), K142, and K151. Zn(2+) is bound by residues E184, H247, and H264.

This sequence belongs to the sugar phosphate cyclases superfamily. Dehydroquinate synthase family. It depends on Co(2+) as a cofactor. Requires Zn(2+) as cofactor. NAD(+) is required as a cofactor.

The protein resides in the cytoplasm. It carries out the reaction 7-phospho-2-dehydro-3-deoxy-D-arabino-heptonate = 3-dehydroquinate + phosphate. The protein operates within metabolic intermediate biosynthesis; chorismate biosynthesis; chorismate from D-erythrose 4-phosphate and phosphoenolpyruvate: step 2/7. Its function is as follows. Catalyzes the conversion of 3-deoxy-D-arabino-heptulosonate 7-phosphate (DAHP) to dehydroquinate (DHQ). In Bacillus cereus (strain AH187), this protein is 3-dehydroquinate synthase.